We begin with the raw amino-acid sequence, 1588 residues long: Paternally-expressed gene 3 protein (1588 aa).

The 83-residue stretch at His-46–Tyr-128 folds into the SCAN box domain. Disordered stretches follow at residues Tyr-128 to Val-231, Gly-265 to Ile-304, and Lys-317 to Asp-347. Positions Gln-129 to Asp-142 are enriched in acidic residues. Composition is skewed to basic and acidic residues over residues Asp-143–Ser-152, Phe-160–Ser-181, Phe-205–Asp-224, and Pro-293–Ile-304. 3 consecutive C2H2-type zinc fingers follow at residues Tyr-452–His-474, Phe-505–His-527, and Tyr-563–His-585. Positions Asp-588–Thr-607 are enriched in basic and acidic residues. Positions Asp-588–Phe-608 are disordered. Residues Tyr-627–His-649 form a C2H2-type 4 zinc finger. 2 disordered regions span residues Val-839–Arg-889 and Gln-905–Val-929. Basic and acidic residues predominate over residues Leu-868–Pro-881. Residues Tyr-969–His-991 form a C2H2-type 5 zinc finger. Residues Glu-1056–Asp-1104 are disordered. Positions Glu-1071–Glu-1082 are enriched in basic and acidic residues. 5 C2H2-type zinc fingers span residues Tyr-1107 to His-1129, Tyr-1163 to His-1185, Ile-1225 to His-1247, Phe-1282 to His-1304, and Tyr-1332 to His-1354. The segment covering Glu-1396 to Ala-1415 has biased composition (acidic residues). Residues Glu-1396–Asp-1495 form a disordered region. 7 tandem repeats follow at residues Pro-1397–Glu-1403, Pro-1404–Glu-1410, Pro-1411–Glu-1417, Pro-1418–Ala-1422, Pro-1425–Ala-1429, Pro-1432–Ala-1436, and Pro-1439–Ala-1443. Positions Pro-1397–Glu-1417 are 3 X 7 AA repeat of P-E-V-E-A-A-E. Positions Pro-1418–Ala-1443 are 4 X 5 AA repeat of P-X-G-E-A. 2 stretches are compositionally biased toward acidic residues: residues Asp-1449 to Glu-1466 and Pro-1475 to Asp-1495. C2H2-type zinc fingers lie at residues Tyr-1505–His-1527 and Phe-1564–His-1586.

This sequence belongs to the krueppel C2H2-type zinc-finger protein family. In terms of assembly, homodimer. Interacts with SIAH1A and SIAH2. Interacts with TRAF2. As to expression, brain, glial cells, astrocytes, embryo, placenta, testis, ovary and uterus. In the placenta it is found in the layer of villous cytotrophoblast cells while in the ovary it is found in the cells of the ovarian stroma including the thecal layers around the follicles. Expression is highly repressed in glioma cell lines.

The protein localises to the nucleus. It is found in the cytoplasm. Its function is as follows. Induces apoptosis in cooperation with SIAH1A. Acts as a mediator between p53/TP53 and BAX in a neuronal death pathway that is activated by DNA damage. Acts synergistically with TRAF2 and inhibits TNF induced apoptosis through activation of NF-kappa-B. Possesses a tumor suppressing activity in glioma cells. The polypeptide is Paternally-expressed gene 3 protein (PEG3) (Homo sapiens (Human)).